Reading from the N-terminus, the 438-residue chain is Adenosylhomocysteinase (438 aa).

Substrate is bound by residues Thr61, Asp137, and Glu162. Position 163–165 (Thr163–Thr165) interacts with NAD(+). The substrate site is built by Lys192 and Asp196. Residues Asn197, Gly226 to Gly231, Glu249, Asn284, Ile305 to His307, and Asn352 contribute to the NAD(+) site.

This sequence belongs to the adenosylhomocysteinase family. The cofactor is NAD(+).

The protein localises to the cytoplasm. The enzyme catalyses S-adenosyl-L-homocysteine + H2O = L-homocysteine + adenosine. The protein operates within amino-acid biosynthesis; L-homocysteine biosynthesis; L-homocysteine from S-adenosyl-L-homocysteine: step 1/1. Its function is as follows. May play a key role in the regulation of the intracellular concentration of adenosylhomocysteine. This is Adenosylhomocysteinase from Flavobacterium psychrophilum (strain ATCC 49511 / DSM 21280 / CIP 103535 / JIP02/86).